We begin with the raw amino-acid sequence, 204 residues long: MGAYKYMQELWRKKQSNVMRFLLRVRCWQYRQLSSLHRAPRPTRPDKARRLGYKAKQGYVIYRIRVRRGGRKRPVPKGATYGKPVHHGVNQIKFARSLQSVAEERAGRHCGGLRVLNSYWVGEDSTYKFFEVILIDTFHKAIRRNPDTQWITKAVRKHREMRGLTSAGKKSRGLGKGHKFHLTIGGSRRAAWKRRNTLQLHRYR.

The protein belongs to the eukaryotic ribosomal protein eL15 family. Component of the large ribosomal subunit.

It localises to the cytoplasm. Component of the large ribosomal subunit. The ribosome is a large ribonucleoprotein complex responsible for the synthesis of proteins in the cell. This is Large ribosomal subunit protein eL15 (rpl15) from Hypophthalmichthys molitrix (Silver carp).